A 450-amino-acid chain; its full sequence is MARNKGGLRFQPSGGARGPAIPVGKKQRLTIERLAHDGRGIAHEAGMTWFVSGGLPGEELEARVLGARSKVVDARSERLFSSSDLRRREPCTVAGRCGGCTLQHLEHGEQLALKQRTLQEQLQRFAGIEPEEWAAPLVGPEFGYRRRARIAVRWDARARRLDVGFRASASQEIVAFDECLVLVPPLQTIARALPALLQDFRKPESIGHVELFHGTASALLLRHTTALVDEDRQRLAAFCSAHQAQLWLQGAEQPLPVEPAAELGYSLGDWQLTLAYRPGDFVQVNAPVNESMIRQALDWLAPTADERVLDLFCGLGNFSLPLARRVARVVGVEGVAAMVERAGANALANGLGNAHFFQADLSKALAEAPWAEQGFTAVLLDPPRDGAFEAVREMSSLGARRVVYVSCNPATLARDAGEMARQGYRLKRAGILDMFPQTAHVEAMALFEAG.

The interval 1–22 (MARNKGGLRFQPSGGARGPAIP) is disordered. Residues 20–78 (AIPVGKKQRLTIERLAHDGRGIAHEAGMTWFVSGGLPGEELEARVLGARSKVVDARSER) enclose the TRAM domain. [4Fe-4S] cluster-binding residues include Cys91, Cys97, Cys100, and Cys179. Gln283, Phe312, Asn317, Glu333, Asp360, and Asp381 together coordinate S-adenosyl-L-methionine. Catalysis depends on Cys407, which acts as the Nucleophile.

This sequence belongs to the class I-like SAM-binding methyltransferase superfamily. RNA M5U methyltransferase family. RlmD subfamily.

The catalysed reaction is uridine(1939) in 23S rRNA + S-adenosyl-L-methionine = 5-methyluridine(1939) in 23S rRNA + S-adenosyl-L-homocysteine + H(+). Its function is as follows. Catalyzes the formation of 5-methyl-uridine at position 1939 (m5U1939) in 23S rRNA. In Pseudomonas aeruginosa (strain UCBPP-PA14), this protein is 23S rRNA (uracil(1939)-C(5))-methyltransferase RlmD.